The sequence spans 360 residues: Glutamine synthetase (360 aa).

Positions I26–G105 constitute a GS beta-grasp domain. The GS catalytic domain occupies Y112–N360.

The protein belongs to the glutamine synthetase family. In terms of assembly, homooctamer.

The protein localises to the cytoplasm. The catalysed reaction is L-glutamate + NH4(+) + ATP = L-glutamine + ADP + phosphate + H(+). The polypeptide is Glutamine synthetase (GLN1) (Colletotrichum gloeosporioides (Anthracnose fungus)).